Here is a 191-residue protein sequence, read N- to C-terminus: MKSLRLMLCAMPLMLTGCSTMSSVNWSAANPWNWFGSSTKVSEQGVGELTASTPLQEQAIADALDGDYRLRSGMKTANGNVVRFFEVMKGDNVAMVINGDQGTISRIDVLDSDIPADTGVKIGTPFSDLYSKAFGNCQKADGDDNRAVECKAEGSQHISYQFSGEWRGPEGLMPSDDTLKNWKVSKIIWRR.

An N-terminal signal peptide occupies residues 1 to 22 (MKSLRLMLCAMPLMLTGCSTMS).

This is an uncharacterized protein from Escherichia coli (strain K12).